The chain runs to 357 residues: Protein-glutamate methylesterase/protein-glutamine glutaminase (357 aa).

One can recognise a Response regulatory domain in the interval 3–120 (RVIVVDDSAF…LASMDLAALS (118 aa)). Residue Asp54 is modified to 4-aspartylphosphate. A CheB-type methylesterase domain is found at 165–357 (ERSRRDIIAI…AERVASALYK (193 aa)). Active-site residues include Ser177, His204, and Asp300.

The protein belongs to the CheB family. Post-translationally, phosphorylated by CheA. Phosphorylation of the N-terminal regulatory domain activates the methylesterase activity.

Its subcellular location is the cytoplasm. It catalyses the reaction [protein]-L-glutamate 5-O-methyl ester + H2O = L-glutamyl-[protein] + methanol + H(+). The catalysed reaction is L-glutaminyl-[protein] + H2O = L-glutamyl-[protein] + NH4(+). Functionally, involved in chemotaxis. Part of a chemotaxis signal transduction system that modulates chemotaxis in response to various stimuli. Catalyzes the demethylation of specific methylglutamate residues introduced into the chemoreceptors (methyl-accepting chemotaxis proteins or MCP) by CheR. Also mediates the irreversible deamidation of specific glutamine residues to glutamic acid. The polypeptide is Protein-glutamate methylesterase/protein-glutamine glutaminase (Lawsonia intracellularis (strain PHE/MN1-00)).